The chain runs to 506 residues: DNA polymerase type-X family protein pol4 (506 aa).

Residues 1-98 (MKILASSTNY…TPGNPYVIWH (98 aa)) form the BRCT domain. Residues 106–150 (GSPYTPSTRPASHTEAPNDFENHETPNTENNNEVKSIDNVDQEGS) are disordered. The segment at 348–357 (RGKPVGADVD) is involved in ssDNA binding. Mg(2+)-binding residues include D355, D357, and D419.

This sequence belongs to the DNA polymerase type-X family. The cofactor is Mg(2+).

It localises to the cytoplasm. Its subcellular location is the nucleus. The enzyme catalyses DNA(n) + a 2'-deoxyribonucleoside 5'-triphosphate = DNA(n+1) + diphosphate. Functionally, repair polymerase. Involved in gap-filling in DNA non-homologous end joining (NHEJ) required for double-strand break repair. Can incorporate a ribonucleotide (rNTP) into a primer DNA. The chain is DNA polymerase type-X family protein pol4 (pol4) from Schizosaccharomyces pombe (strain 972 / ATCC 24843) (Fission yeast).